We begin with the raw amino-acid sequence, 252 residues long: tRNA (guanine-N(1)-)-methyltransferase (252 aa).

Residues Gly113 and 133-138 (IGDYVL) each bind S-adenosyl-L-methionine.

Belongs to the RNA methyltransferase TrmD family. In terms of assembly, homodimer.

The protein resides in the cytoplasm. It catalyses the reaction guanosine(37) in tRNA + S-adenosyl-L-methionine = N(1)-methylguanosine(37) in tRNA + S-adenosyl-L-homocysteine + H(+). In terms of biological role, specifically methylates guanosine-37 in various tRNAs. This is tRNA (guanine-N(1)-)-methyltransferase from Xanthomonas campestris pv. campestris (strain B100).